The primary structure comprises 372 residues: Stress-activated protein kinase JNK (372 aa).

Residues 24-320 (YINLRPIGSG…VDEALKHEYI (297 aa)) enclose the Protein kinase domain. Residues 31–36 (GSGAQG) and lysine 53 contribute to the ATP site. Aspartate 149 (proton acceptor) is an active-site residue. Threonine 181 is modified (phosphothreonine). A TXY motif is present at residues 181–183 (TPY). The residue at position 183 (tyrosine 183) is a Phosphotyrosine.

It belongs to the protein kinase superfamily. CMGC Ser/Thr protein kinase family. MAP kinase subfamily. In terms of assembly, interacts with MKP-4 (via tyrosine-protein phosphatase domain); the interaction dephosphorylates bsk. It depends on Mg(2+) as a cofactor. Dually phosphorylated on Thr-181 and Tyr-183, which activates the enzyme. As to expression, during gastrulation, expression is seen in cells undergoing morphogenetic movements. By stage 9 of embryonic development, expression is ubiquitous. At stages 12-14, expression occurs in epidermis and central nervous system. At stage 15, expression is restricted to ventral nerve cord, brain and some peripheral neurons. In larvae, expression is seen in all imaginal disks, with highest levels in wing and eye disks, and in the CNS. Adults express the protein in fat body and hemocytes.

The protein localises to the nucleus. It is found in the cytoplasm. The enzyme catalyses L-seryl-[protein] + ATP = O-phospho-L-seryl-[protein] + ADP + H(+). It carries out the reaction L-threonyl-[protein] + ATP = O-phospho-L-threonyl-[protein] + ADP + H(+). Its activity is regulated as follows. Activated by threonine and tyrosine phosphorylation by the dual specificity kinase, hep. Inhibited by dual specificity phosphatase, puckered. Its function is as follows. Mitogen-activated protein kinase and key component of the c-Jun N-terminal kinase (JNK) pathway which phosphorylate and activate transcription factors involved in a wide range of biological processes including response to various stresses, cellular proliferation, differentiation and migration, and regulation of cell shape. Responds to activation by environmental stress by phosphorylating a number of transcription factors, primarily components of AP-1 such as Jra and also the transcriptional repressor aop, and thus regulates transcriptional activity. Component of the immune response activated by bacterial infection, and is involved in wound healing and in dorsal closure, a morphogenetic movement during embryogenesis. Functions in the systematic response to wounding acting downstream of the Hayan-phenoloxidase PPO1 cascade. During epidermal wound healing involved in cellular polarization by inducing the translocation of sktl and mys/integrin beta to the trailing edge. Exhibits cytoprotective activity in neuronal cells in response to wounding to the integument. Controls the expression of a phosphatase, puckered, at the edges of wounded epidermal tissue and in the dorsal epithelium during dorsal closure. Regulates the activity of SREBP in neurons and thereby the accumulation of lipids in glia. Plays a role in positively regulating the expression of DIP2 independently of AP-1, thereby ensuring proper axon guidance in mushroom bodies. In enterocytes and differentiating progenitors of the gut that are experiencing inorganic phosphate (Pi) deficiency, activated by Cka to induce nearby progenitor cells to proliferate and form new absorptive cells, probably helping the organism to cope with the nutrient deficiency by maximizing absorption of dietary Pi. This Drosophila melanogaster (Fruit fly) protein is Stress-activated protein kinase JNK.